The sequence spans 292 residues: Putative pyruvate, phosphate dikinase regulatory protein (292 aa).

Residue 155–162 participates in ADP binding; it reads GVSRSSKT.

Belongs to the pyruvate, phosphate/water dikinase regulatory protein family. PDRP subfamily.

It carries out the reaction N(tele)-phospho-L-histidyl/L-threonyl-[pyruvate, phosphate dikinase] + ADP = N(tele)-phospho-L-histidyl/O-phospho-L-threonyl-[pyruvate, phosphate dikinase] + AMP + H(+). The enzyme catalyses N(tele)-phospho-L-histidyl/O-phospho-L-threonyl-[pyruvate, phosphate dikinase] + phosphate + H(+) = N(tele)-phospho-L-histidyl/L-threonyl-[pyruvate, phosphate dikinase] + diphosphate. Its function is as follows. Bifunctional serine/threonine kinase and phosphorylase involved in the regulation of the pyruvate, phosphate dikinase (PPDK) by catalyzing its phosphorylation/dephosphorylation. This is Putative pyruvate, phosphate dikinase regulatory protein from Acidiphilium cryptum (strain JF-5).